The chain runs to 555 residues: Glutamine--tRNA ligase (555 aa).

Positions 34 to 44 (PEPNGYLHIGH) match the 'HIGH' region motif. ATP-binding positions include 35-37 (EPN) and 41-47 (HIGHAKS). L-glutamine contacts are provided by Asp-67 and Tyr-212. ATP-binding positions include Thr-231, 261–262 (RL), and 269–271 (MSK). A 'KMSKS' region motif is present at residues 268 to 272 (VMSKR). The interaction with tRNA stretch occupies residues 317-324 (TKQDNTIE).

This sequence belongs to the class-I aminoacyl-tRNA synthetase family. In terms of assembly, monomer.

The protein resides in the cytoplasm. The enzyme catalyses tRNA(Gln) + L-glutamine + ATP = L-glutaminyl-tRNA(Gln) + AMP + diphosphate. The sequence is that of Glutamine--tRNA ligase from Salmonella newport (strain SL254).